A 59-amino-acid polypeptide reads, in one-letter code: Protein translocase subunit SecE (59 aa).

Residues 37–57 traverse the membrane as a helical segment; that stretch reads LIVLLFVGLLAFLVQLAFSIL.

This sequence belongs to the SecE/SEC61-gamma family. In terms of assembly, component of the Sec protein translocase complex. Heterotrimer consisting of SecY (alpha), SecG (beta) and SecE (gamma) subunits. The heterotrimers can form oligomers, although 1 heterotrimer is thought to be able to translocate proteins. Interacts with the ribosome. May interact with SecDF, and other proteins may be involved.

It localises to the cell membrane. In terms of biological role, essential subunit of the Sec protein translocation channel SecYEG. Clamps together the 2 halves of SecY. May contact the channel plug during translocation. The protein is Protein translocase subunit SecE of Metallosphaera sedula (strain ATCC 51363 / DSM 5348 / JCM 9185 / NBRC 15509 / TH2).